The sequence spans 492 residues: Bifunctional protein GlmU (492 aa).

The interval 1-241 is pyrophosphorylase; sequence MIPENTGPAA…RWQVEGANDR (241 aa). Residues 14–17, K28, Q81, 86–87, 112–114, G151, E166, N181, and N239 contribute to the UDP-N-acetyl-alpha-D-glucosamine site; these read LAAG, GT, and YGD. D114 is a Mg(2+) binding site. N239 contacts Mg(2+). Residues 242–262 are linker; the sequence is VQLAALGAELNRRTVEAWMRA. An N-acetyltransferase region spans residues 263-492; that stretch reads GVTVVDPSTT…STPASTEEGK (230 aa). UDP-N-acetyl-alpha-D-glucosamine contacts are provided by R344 and K362. The Proton acceptor role is filled by H374. Positions 377 and 388 each coordinate UDP-N-acetyl-alpha-D-glucosamine. Acetyl-CoA contacts are provided by residues 397–398, S416, and A434; that span reads NY. The segment at 460 to 492 is disordered; that stretch reads WVPANRPGSRSAELAQAAINNSSSTPASTEEGK. Over residues 477 to 492 the composition is skewed to polar residues; that stretch reads AINNSSSTPASTEEGK.

This sequence in the N-terminal section; belongs to the N-acetylglucosamine-1-phosphate uridyltransferase family. In the C-terminal section; belongs to the transferase hexapeptide repeat family. As to quaternary structure, homotrimer. Mg(2+) serves as cofactor.

It is found in the cytoplasm. The catalysed reaction is alpha-D-glucosamine 1-phosphate + acetyl-CoA = N-acetyl-alpha-D-glucosamine 1-phosphate + CoA + H(+). It carries out the reaction N-acetyl-alpha-D-glucosamine 1-phosphate + UTP + H(+) = UDP-N-acetyl-alpha-D-glucosamine + diphosphate. Its pathway is nucleotide-sugar biosynthesis; UDP-N-acetyl-alpha-D-glucosamine biosynthesis; N-acetyl-alpha-D-glucosamine 1-phosphate from alpha-D-glucosamine 6-phosphate (route II): step 2/2. It participates in nucleotide-sugar biosynthesis; UDP-N-acetyl-alpha-D-glucosamine biosynthesis; UDP-N-acetyl-alpha-D-glucosamine from N-acetyl-alpha-D-glucosamine 1-phosphate: step 1/1. It functions in the pathway bacterial outer membrane biogenesis; LPS lipid A biosynthesis. Its function is as follows. Catalyzes the last two sequential reactions in the de novo biosynthetic pathway for UDP-N-acetylglucosamine (UDP-GlcNAc). The C-terminal domain catalyzes the transfer of acetyl group from acetyl coenzyme A to glucosamine-1-phosphate (GlcN-1-P) to produce N-acetylglucosamine-1-phosphate (GlcNAc-1-P), which is converted into UDP-GlcNAc by the transfer of uridine 5-monophosphate (from uridine 5-triphosphate), a reaction catalyzed by the N-terminal domain. In Pseudarthrobacter chlorophenolicus (strain ATCC 700700 / DSM 12829 / CIP 107037 / JCM 12360 / KCTC 9906 / NCIMB 13794 / A6) (Arthrobacter chlorophenolicus), this protein is Bifunctional protein GlmU.